Reading from the N-terminus, the 164-residue chain is 3-isopropylmalate dehydratase small subunit 2 (164 aa).

The protein belongs to the LeuD family. LeuD type 2 subfamily. In terms of assembly, heterodimer of LeuC and LeuD.

It catalyses the reaction (2R,3S)-3-isopropylmalate = (2S)-2-isopropylmalate. The protein operates within amino-acid biosynthesis; L-leucine biosynthesis; L-leucine from 3-methyl-2-oxobutanoate: step 2/4. Its function is as follows. Catalyzes the isomerization between 2-isopropylmalate and 3-isopropylmalate, via the formation of 2-isopropylmaleate. The protein is 3-isopropylmalate dehydratase small subunit 2 (leuD2) of Pyrococcus furiosus (strain ATCC 43587 / DSM 3638 / JCM 8422 / Vc1).